The following is a 219-amino-acid chain: Envelope protein US9 homolog (219 aa).

Residues 1–193 (MEKAEAAAVV…RHRRRRVALT (193 aa)) lie on the Intravirion side of the membrane. The short motif at 145–146 (LL) is the Di-leucine internalization motif element. The acidic stretch occupies residues 153–168 (DYDSESGCYYSESDNE). 2 positions are modified to phosphoserine; by host CK2: Ser163 and Ser165. The helical; Signal-anchor for type II membrane protein transmembrane segment at 194-214 (VAGVILVVVLCAISGIVGAFL) threads the bilayer. Over 215 to 219 (ARVFP) the chain is Virion surface.

Belongs to the alphaherpesvirinae envelope protein US9 family. Phosphorylated on serines within the acidic cluster. Phosphorylation determines whether endocytosed viral US9 traffics to the trans-Golgi network or recycles to the cell membrane.

Its subcellular location is the virion membrane. It is found in the host Golgi apparatus membrane. The protein resides in the host smooth endoplasmic reticulum membrane. It localises to the host cell membrane. Essential for the anterograde spread of the infection throughout the host nervous system. Together with the gE/gI heterodimer, US9 is involved in the sorting and transport of viral structural components toward axon tips. The protein is Envelope protein US9 homolog of Equine herpesvirus 1 (strain Kentucky A) (EHV-1).